A 217-amino-acid chain; its full sequence is Probable transaldolase (217 aa).

The active-site Schiff-base intermediate with substrate is K83.

It belongs to the transaldolase family. Type 3B subfamily.

It localises to the cytoplasm. It carries out the reaction D-sedoheptulose 7-phosphate + D-glyceraldehyde 3-phosphate = D-erythrose 4-phosphate + beta-D-fructose 6-phosphate. It functions in the pathway carbohydrate degradation; pentose phosphate pathway; D-glyceraldehyde 3-phosphate and beta-D-fructose 6-phosphate from D-ribose 5-phosphate and D-xylulose 5-phosphate (non-oxidative stage): step 2/3. Functionally, transaldolase is important for the balance of metabolites in the pentose-phosphate pathway. The sequence is that of Probable transaldolase from Lactiplantibacillus plantarum (strain ATCC BAA-793 / NCIMB 8826 / WCFS1) (Lactobacillus plantarum).